A 582-amino-acid chain; its full sequence is Beta-glucosidase 28 (582 aa).

The first 21 residues, 1 to 21 (MKMHFFILLVITSWLSEKITS), serve as a signal peptide directing secretion. Residues Gln48, His151, and 196 to 197 (NE) each bind a beta-D-glucoside. The active-site Proton donor is Glu197. A disulfide bond links Cys216 and Cys224. N-linked (GlcNAc...) asparagine glycans are attached at residues Asn255 and Asn330. Tyr340 contributes to the a beta-D-glucoside binding site. Asn370 carries N-linked (GlcNAc...) asparagine glycosylation. Glu412 provides a ligand contact to a beta-D-glucoside. Glu412 (nucleophile) is an active-site residue. The N-linked (GlcNAc...) asparagine glycan is linked to Asn430. A beta-D-glucoside contacts are provided by residues Trp462, 469-470 (EW), and Phe478. 2 N-linked (GlcNAc...) asparagine glycosylation sites follow: Asn521 and Asn544.

It belongs to the glycosyl hydrolase 1 family.

The enzyme catalyses Hydrolysis of terminal, non-reducing beta-D-glucosyl residues with release of beta-D-glucose.. The polypeptide is Beta-glucosidase 28 (Arabidopsis thaliana (Mouse-ear cress)).